The sequence spans 311 residues: tRNA dimethylallyltransferase (311 aa).

10–17 (GPTASGKT) is an ATP binding site. Residue 12–17 (TASGKT) participates in substrate binding. Interaction with substrate tRNA regions lie at residues 35-38 (DSAL), 159-163 (QRINR), and 240-245 (RCVGYR).

It belongs to the IPP transferase family. In terms of assembly, monomer. Requires Mg(2+) as cofactor.

It carries out the reaction adenosine(37) in tRNA + dimethylallyl diphosphate = N(6)-dimethylallyladenosine(37) in tRNA + diphosphate. Its function is as follows. Catalyzes the transfer of a dimethylallyl group onto the adenine at position 37 in tRNAs that read codons beginning with uridine, leading to the formation of N6-(dimethylallyl)adenosine (i(6)A). This Haemophilus influenzae (strain PittEE) protein is tRNA dimethylallyltransferase.